The sequence spans 1495 residues: ABC transporter C family member 12 (1495 aa).

11 consecutive transmembrane segments (helical) span residues 38 to 58 (VMLVSHFVLLGLCFYRIWIIF), 76 to 96 (VLGLLACYCVVEPVLRLVMGI), 110 to 130 (FEVASLMVEAFAWFSMLVLIG), 146 to 166 (FGVLYVLVADAVLLDLVLPLK), 173 to 195 (ALYLFISSRCSQALFGILLLIYI), 303 to 323 (FWLAGIFKIGNDLSQFVGPVI), 337 to 357 (AWVGYVYAFIIFVGVTLGVLC), 420 to 440 (GLWSAPFRIIVSMILLYQQLG), 441 to 461 (VASLFGSLILFLLIPLQTLII), 528 to 548 (FILNSIPVVVTVVSFGVFVLL), and 558 to 578 (FTSLSLFAVLRFPLNMLPNLL). Positions 303-583 (FWLAGIFKIG…LPNLLSQVVN (281 aa)) constitute an ABC transmembrane type-1 1 domain. Residues 615 to 839 (ISIKNGYFSW…GILFKKLMEN (225 aa)) form the ABC transporter 1 domain. Residue 650–657 (GGTGEGKT) coordinates ATP. 5 consecutive transmembrane segments (helical) span residues 907–927 (AVGGLWVVMILLACYLATEVL), 949–969 (PGFYIVVYALLGFGQVAVTFT), 1042–1062 (FALIGTVSTISLWAIMPLLIL), 1140–1160 (LETLGGVMIWLTATFAVLQNG), and 1166–1186 (AGFASTMGLLLSYTLNITSLL). The region spanning 914–1198 (VMILLACYLA…VLRQASRAEN (285 aa)) is the ABC transmembrane type-1 2 domain. In terms of domain architecture, ABC transporter 2 spans 1235-1469 (IKFEDVHLRY…DTSAFFRMVH (235 aa)). Residue 1269–1276 (GRTGAGKS) participates in ATP binding.

It belongs to the ABC transporter superfamily. ABCC family. Conjugate transporter (TC 3.A.1.208) subfamily. As to expression, ubiquitous.

The protein resides in the membrane. The enzyme catalyses ATP + H2O + xenobioticSide 1 = ADP + phosphate + xenobioticSide 2.. Pump for glutathione S-conjugates. The chain is ABC transporter C family member 12 (ABCC12) from Arabidopsis thaliana (Mouse-ear cress).